The chain runs to 641 residues: Serine/threonine-protein kinase pink-1, mitochondrial (641 aa).

The transit peptide at 1-74 (MSMKRFGKAA…TRHGRVFRPF (74 aa)) directs the protein to the mitochondrion. Positions 137–483 (YEFGEFLGQG…AANALNLSLF (347 aa)) constitute a Protein kinase domain. ATP-binding positions include 143–151 (LGQGCNAAV) and K199. D338 acts as the Proton acceptor in catalysis.

It belongs to the protein kinase superfamily. Ser/Thr protein kinase family. Requires Mg(2+) as cofactor. In terms of processing, autophosphorylated.

It localises to the mitochondrion. It catalyses the reaction L-seryl-[protein] + ATP = O-phospho-L-seryl-[protein] + ADP + H(+). The enzyme catalyses L-threonyl-[protein] + ATP = O-phospho-L-threonyl-[protein] + ADP + H(+). Protects against mitochondrial dysfunction during cellular stress, potentially by phosphorylating mitochondrial proteins. Plays a role in mitophagy. The protein is Serine/threonine-protein kinase pink-1, mitochondrial (pink-1) of Caenorhabditis elegans.